Here is a 377-residue protein sequence, read N- to C-terminus: 3-dehydroquinate synthase (377 aa).

Residues 115–119 (GVIGD), 139–140 (TS), Lys-152, and Lys-161 contribute to the NAD(+) site. The Zn(2+) site is built by Glu-194, His-256, and His-275.

The protein belongs to the sugar phosphate cyclases superfamily. Dehydroquinate synthase family. It depends on NAD(+) as a cofactor. Co(2+) serves as cofactor. Requires Zn(2+) as cofactor.

The protein resides in the cytoplasm. The enzyme catalyses 7-phospho-2-dehydro-3-deoxy-D-arabino-heptonate = 3-dehydroquinate + phosphate. Its pathway is metabolic intermediate biosynthesis; chorismate biosynthesis; chorismate from D-erythrose 4-phosphate and phosphoenolpyruvate: step 2/7. Its function is as follows. Catalyzes the conversion of 3-deoxy-D-arabino-heptulosonate 7-phosphate (DAHP) to dehydroquinate (DHQ). The protein is 3-dehydroquinate synthase of Agrobacterium fabrum (strain C58 / ATCC 33970) (Agrobacterium tumefaciens (strain C58)).